The chain runs to 777 residues: Semaphorin-3D (777 aa).

The first 37 residues, 1-37 (MNVTKDENPRSRSQDLHLFHAWMMLIMTVLFLPVTET), serve as a signal peptide directing secretion. The Sema domain occupies 44–531 (RLKLTYKDLL…SWDGLVQLSL (488 aa)). Cys-117 and Cys-128 are oxidised to a cystine. An N-linked (GlcNAc...) asparagine glycan is attached at Asn-139. 4 cysteine pairs are disulfide-bonded: Cys-146-Cys-155, Cys-286-Cys-398, Cys-310-Cys-358, and Cys-534-Cys-552. A PSI domain is found at 533 to 585 (RCDTYGKACADCCLARDPYCAWDGNACSRYAPTSKRRARRQDVKYGDPITQCW). The region spanning 592–680 (SHETADEKVI…TFIHTIVKLT (89 aa)) is the Ig-like C2-type domain. N-linked (GlcNAc...) asparagine glycosylation is found at Asn-607 and Asn-724. Residues Cys-665 and Cys-731 are joined by a disulfide bond. Over residues 740–765 (RRQRNKGSPKWKHMQEMKKKRNRRHH) the composition is skewed to basic residues. A disordered region spans residues 740–777 (RRQRNKGSPKWKHMQEMKKKRNRRHHRDLDELQRSVAT). Basic and acidic residues predominate over residues 766–777 (RDLDELQRSVAT).

The protein belongs to the semaphorin family.

Its subcellular location is the secreted. In terms of biological role, induces the collapse and paralysis of neuronal growth cones. Could potentially act as repulsive cues toward specific neuronal populations. Binds to neuropilin. The protein is Semaphorin-3D (Sema3d) of Mus musculus (Mouse).